The primary structure comprises 238 residues: Survival of motor neuron-related-splicing factor 30 (238 aa).

The Tudor domain maps to 72 to 132; that stretch reads SWKVGDKCMA…KPVEEGRKAK (61 aa). The Nuclear localization signal motif lies at 142–160; it reads KKEMIAQQREYKKKKALKK. Phosphoserine is present on serine 201. An N6-acetyllysine modification is found at lysine 219.

It belongs to the SMN family. Associates with spliceosomes. Associates with U4/U5/U6 tri-snRNP and with U2 snRNP.

Its subcellular location is the nucleus speckle. The protein localises to the nucleus. The protein resides in the cajal body. In terms of biological role, involved in spliceosome assembly. This Mus musculus (Mouse) protein is Survival of motor neuron-related-splicing factor 30 (Smndc1).